The primary structure comprises 156 residues: Small ribosomal subunit protein uS7 (156 aa).

The protein belongs to the universal ribosomal protein uS7 family. Part of the 30S ribosomal subunit. Contacts proteins S9 and S11.

One of the primary rRNA binding proteins, it binds directly to 16S rRNA where it nucleates assembly of the head domain of the 30S subunit. Is located at the subunit interface close to the decoding center, probably blocks exit of the E-site tRNA. In Anoxybacillus flavithermus (strain DSM 21510 / WK1), this protein is Small ribosomal subunit protein uS7.